Reading from the N-terminus, the 279-residue chain is Digeranylgeranylglyceryl phosphate synthase (279 aa).

Helical transmembrane passes span 16 to 36, 40 to 60, 77 to 99, 104 to 121, 124 to 144, 146 to 166, 192 to 212, 220 to 240, and 259 to 279; these read LIAG…LPPI, LLIF…NDYF, GALS…ILIA, FEAF…YLYA, LKPQ…ITPI, GAIA…AFLV, IVWG…ATII, AGIG…LWAA, and LKIA…TKGV.

This sequence belongs to the UbiA prenyltransferase family. DGGGP synthase subfamily. Requires Mg(2+) as cofactor.

It localises to the cell membrane. The catalysed reaction is sn-3-O-(geranylgeranyl)glycerol 1-phosphate + (2E,6E,10E)-geranylgeranyl diphosphate = 2,3-bis-O-(geranylgeranyl)-sn-glycerol 1-phosphate + diphosphate. The protein operates within membrane lipid metabolism; glycerophospholipid metabolism. Prenyltransferase that catalyzes the transfer of the geranylgeranyl moiety of geranylgeranyl diphosphate (GGPP) to the C2 hydroxyl of (S)-3-O-geranylgeranylglyceryl phosphate (GGGP). This reaction is the second ether-bond-formation step in the biosynthesis of archaeal membrane lipids. The chain is Digeranylgeranylglyceryl phosphate synthase from Thermococcus sibiricus (strain DSM 12597 / MM 739).